We begin with the raw amino-acid sequence, 88 residues long: Pape peptide (88 aa).

Positions 1–22 are cleaved as a signal peptide; sequence MNRKTLLVIFFVTLLIAEEVNS. A propeptide spanning residues 23 to 45 is cleaved from the precursor; it reads FRLGGFLKKIWRSKLVKRLRSKG. Residues 49-88 form a disordered region; sequence LKEALAPEPAPEPAPEPAPEAAPEAAPEPAAAAPERRRRR. Pro residues predominate over residues 56–68; it reads EPAPEPAPEPAPE. 3 PAPE repeats span residues 57–60, 61–64, and 65–68; these read PAPE. Over residues 69-81 the composition is skewed to low complexity; the sequence is AAPEAAPEPAAAA.

As to expression, expressed by the venom gland.

The protein localises to the secreted. This chain is Pape peptide, found in Tityus serrulatus (Brazilian scorpion).